We begin with the raw amino-acid sequence, 290 residues long: uncharacterized protein (290 aa).

Residues 2-238 (LKTENLSVGY…EIVNELYDLK (237 aa)) form the ABC transporter domain. 34-41 (GPNGAGKS) lines the ATP pocket.

It belongs to the ABC transporter superfamily.

This is an uncharacterized protein from Methanocaldococcus jannaschii (strain ATCC 43067 / DSM 2661 / JAL-1 / JCM 10045 / NBRC 100440) (Methanococcus jannaschii).